The following is a 332-amino-acid chain: UPF0194 membrane protein YbhG (332 aa).

An N-terminal signal peptide occupies residues 1-16 (MMKKTVVIGLAVVVLA). Positions 108–209 (EEIAQAAAAV…LNLQDSTLIA (102 aa)) form a coiled coil.

It belongs to the UPF0194 family.

The protein resides in the periplasm. This Shigella dysenteriae serotype 1 (strain Sd197) protein is UPF0194 membrane protein YbhG.